Here is a 116-residue protein sequence, read N- to C-terminus: Fluoride-specific ion channel FluC 1 (116 aa).

The next 4 helical transmembrane spans lie at 1–21, 31–51, 58–78, and 92–112; these read MGKL…RYTV, IPAG…FLTF, MVYL…TFAY, and FFLN…IAYL. The Na(+) site is built by Gly68 and Thr71.

It belongs to the fluoride channel Fluc/FEX (TC 1.A.43) family.

Its subcellular location is the cell membrane. The catalysed reaction is fluoride(in) = fluoride(out). With respect to regulation, na(+) is not transported, but it plays an essential structural role and its presence is essential for fluoride channel function. Fluoride-specific ion channel. Important for reducing fluoride concentration in the cell, thus reducing its toxicity. This is Fluoride-specific ion channel FluC 1 from Methanosarcina barkeri (strain Fusaro / DSM 804).